Consider the following 522-residue polypeptide: Protein nucleotidyltransferase YdiU (522 aa).

Positions 109, 111, 112, 132, 144, 145, 195, and 202 each coordinate ATP. Asp271 (proton acceptor) is an active-site residue. The Mg(2+) site is built by Asn272 and Asp281. Asp281 is a binding site for ATP.

The protein belongs to the SELO family. Requires Mg(2+) as cofactor. Mn(2+) is required as a cofactor.

The enzyme catalyses L-seryl-[protein] + ATP = 3-O-(5'-adenylyl)-L-seryl-[protein] + diphosphate. It catalyses the reaction L-threonyl-[protein] + ATP = 3-O-(5'-adenylyl)-L-threonyl-[protein] + diphosphate. It carries out the reaction L-tyrosyl-[protein] + ATP = O-(5'-adenylyl)-L-tyrosyl-[protein] + diphosphate. The catalysed reaction is L-histidyl-[protein] + UTP = N(tele)-(5'-uridylyl)-L-histidyl-[protein] + diphosphate. The enzyme catalyses L-seryl-[protein] + UTP = O-(5'-uridylyl)-L-seryl-[protein] + diphosphate. It catalyses the reaction L-tyrosyl-[protein] + UTP = O-(5'-uridylyl)-L-tyrosyl-[protein] + diphosphate. Functionally, nucleotidyltransferase involved in the post-translational modification of proteins. It can catalyze the addition of adenosine monophosphate (AMP) or uridine monophosphate (UMP) to a protein, resulting in modifications known as AMPylation and UMPylation. This Burkholderia ambifaria (strain ATCC BAA-244 / DSM 16087 / CCUG 44356 / LMG 19182 / AMMD) (Burkholderia cepacia (strain AMMD)) protein is Protein nucleotidyltransferase YdiU.